The sequence spans 319 residues: Probable arabinan endo-1,5-alpha-L-arabinosidase C (319 aa).

Residues Met-1–Ala-16 form the signal peptide. Asp-31 functions as the Proton acceptor in the catalytic mechanism. N-linked (GlcNAc...) asparagine glycosylation is present at Asn-190. The Proton donor role is filled by Glu-198. N-linked (GlcNAc...) asparagine glycosylation occurs at Asn-222.

Belongs to the glycosyl hydrolase 43 family.

The protein resides in the secreted. The catalysed reaction is Endohydrolysis of (1-&gt;5)-alpha-arabinofuranosidic linkages in (1-&gt;5)-arabinans.. Its pathway is glycan metabolism; L-arabinan degradation. Its function is as follows. Endo-1,5-alpha-L-arabinanase involved in degradation of pectin. Its preferred substrate is linear 1,5-alpha-L-arabinan. This is Probable arabinan endo-1,5-alpha-L-arabinosidase C (abnC) from Aspergillus clavatus (strain ATCC 1007 / CBS 513.65 / DSM 816 / NCTC 3887 / NRRL 1 / QM 1276 / 107).